The sequence spans 248 residues: Probable transcriptional regulatory protein PFL_4766 (248 aa).

Belongs to the TACO1 family.

The protein localises to the cytoplasm. This chain is Probable transcriptional regulatory protein PFL_4766, found in Pseudomonas fluorescens (strain ATCC BAA-477 / NRRL B-23932 / Pf-5).